The chain runs to 54 residues: H-bracotoxin-Cf4 (54 aa).

The N-terminal stretch at 1–21 (MSKLFIFFLLVALLAFVSSEA) is a signal peptide. Cystine bridges form between Cys24/Cys39, Cys31/Cys43, and Cys38/Cys53.

In terms of tissue distribution, expressed by the venom duct.

The protein localises to the secreted. In terms of biological role, this endoparasitoid wasp peptide has a role in disruption of the cellular host immune response, since it reduces the capacity of D.saccharalis hemocytes to encapsulate foreign bodies. On the other hand, it shows no effect on the humoral immune response, since it has no effect on phenoloxidase activity. The sequence is that of H-bracotoxin-Cf4 from Cotesia flavipes (Parasitic wasp).